Here is a 295-residue protein sequence, read N- to C-terminus: Cyclin-G1 (295 aa).

It belongs to the cyclin family. Cyclin G subfamily.

It is found in the nucleus. In terms of biological role, may play a role in growth regulation. Is associated with G2/M phase arrest in response to DNA damage. May be an intermediate by which p53 mediates its role as an inhibitor of cellular proliferation. This Bos taurus (Bovine) protein is Cyclin-G1 (CCNG1).